The sequence spans 556 residues: Formate--tetrahydrofolate ligase (556 aa).

65–72 (TPAGEGKT) is a binding site for ATP.

It belongs to the formate--tetrahydrofolate ligase family.

It catalyses the reaction (6S)-5,6,7,8-tetrahydrofolate + formate + ATP = (6R)-10-formyltetrahydrofolate + ADP + phosphate. It participates in one-carbon metabolism; tetrahydrofolate interconversion. This is Formate--tetrahydrofolate ligase from Peptoclostridium acidaminophilum (Eubacterium acidaminophilum).